Here is a 1413-residue protein sequence, read N- to C-terminus: Zinc finger protein 609 (1413 aa).

5 disordered regions span residues 1–26 (MSLSSGACGGKGVDANPVETYDSGDE), 47–196 (QKLE…GRGS), 354–484 (RFCD…EPTL), 517–659 (AHAH…RPIA), and 695–765 (PNSP…AAGD). A phosphoserine mark is found at S358, S361, and S379. At T381 the chain carries Phosphothreonine. Over residues 386 to 405 (AAAASDSKGTSSSSKTRAGA) the composition is skewed to low complexity. A phosphoserine mark is found at S413, S433, S446, S452, S467, and S470. The segment covering 423–437 (ASSTSEDVKASPSSA) has biased composition (polar residues). K479 participates in a covalent cross-link: Glycyl lysine isopeptide (Lys-Gly) (interchain with G-Cter in SUMO2). Residues 495–520 (IDCPHPNCNKKYKHINGLKYHQAHAH) form a C2H2-type zinc finger. Basic and acidic residues predominate over residues 519 to 529 (AHTDDDSKPEA). Residues S533, S575, and S577 each carry the phosphoserine modification. Residues 625–648 (SLERKCMEKEKCKKPSSLKSEKIP) show a composition bias toward basic and acidic residues. Over residues 725 to 735 (DKKKKDKKKKD) the composition is skewed to basic residues. S742 bears the Phosphoserine mark. A Phosphothreonine modification is found at T745. The segment covering 750-763 (CRAEEGKSPFRDAA) has biased composition (basic and acidic residues). S757 is modified (phosphoserine). A Glycyl lysine isopeptide (Lys-Gly) (interchain with G-Cter in SUMO2) cross-link involves residue K788. Over residues 797-843 (FTDNAPSPSIGGSSRLDSTTPTQPLTPLHVVTQNGAEASSVKTNSPA) the composition is skewed to polar residues. Disordered stretches follow at residues 797–962 (FTDN…VIQQ), 1004–1127 (YEEQ…RQAE), 1154–1221 (IKSE…SPLT), and 1273–1369 (SKVS…STHH). S803 carries the post-translational modification Phosphoserine. Residue T822 is modified to Phosphothreonine. Phosphoserine occurs at positions 841, 845, and 848. Residues 854–875 (GEGKVDSAKSKDPEQLVKEGAK) are compositionally biased toward basic and acidic residues. The segment covering 902–916 (YAQSSPGTLTSSSQA) has biased composition (polar residues). Positions 925–949 (TKKDEEPESVEGKVKNDVCEEKKPE) are enriched in basic and acidic residues. A compositionally biased stretch (polar residues) spans 950-962 (LSNSSQQPSVIQQ). Residues 1022–1044 (GLDKKTEMGLKEREASLKEEWKQ) show a composition bias toward basic and acidic residues. S1057 bears the Phosphoserine mark. Residue K1063 forms a Glycyl lysine isopeptide (Lys-Gly) (interchain with G-Cter in SUMO2) linkage. Basic and acidic residues-rich tracts occupy residues 1099–1115 (LKGKLGEASHLGKEASE), 1154–1189 (IKSEDDRWKEERDRKLKEDRSRSKDSVPKEDGKEST), and 1197–1210 (PSEESRLGSKEPRP). Residue K1155 forms a Glycyl lysine isopeptide (Lys-Gly) (interchain with G-Cter in SUMO2) linkage. Positions 1288–1298 (PSVSCKASSES) are enriched in polar residues. Residue K1299 forms a Glycyl lysine isopeptide (Lys-Gly) (interchain with G-Cter in SUMO2) linkage. The segment covering 1330-1348 (GCGVVGGGGSCGSVAGAGG) has biased composition (gly residues).

In terms of assembly, interacts (via N-terminus) with NIPBL. Interacts with the multiprotein complex Integrator. As to expression, expressed in myoblasts. Expressed in neurons in various brain regions, including striatum, prefrontal cortex, olfactory bulb, midbrain, cerebellum and hippocampus. Expressed in neural stem cells (at protein level). Expressed in thymocytes.

Its subcellular location is the nucleus. Its function is as follows. Transcription factor, which activates RAG1, and possibly RAG2, transcription. Through the regulation of RAG1/2 expression, may regulate thymocyte maturation. Along with NIPBL and the multiprotein complex Integrator, promotes cortical neuron migration during brain development by regulating the transcription of crucial genes in this process. Preferentially binds promoters containing paused RNA polymerase II. Up-regulates the expression of SEMA3A, NRP1, PLXND1 and GABBR2 genes, among others. Functionally, involved in regulation of myoblast proliferation during myogenesis. This Mus musculus (Mouse) protein is Zinc finger protein 609 (Znf609).